The primary structure comprises 460 residues: Bifunctional protein GlmU (460 aa).

The tract at residues Met-1–Arg-232 is pyrophosphorylase. UDP-N-acetyl-alpha-D-glucosamine contacts are provided by residues Leu-9–Gly-12, Lys-23, Gln-75, and Gly-80–Thr-81. Asp-105 serves as a coordination point for Mg(2+). Positions 142, 157, 172, and 230 each coordinate UDP-N-acetyl-alpha-D-glucosamine. Asn-230 serves as a coordination point for Mg(2+). The interval Val-233–Ala-253 is linker. Positions Gly-254–Gly-460 are N-acetyltransferase. UDP-N-acetyl-alpha-D-glucosamine contacts are provided by Arg-336 and Lys-354. The Proton acceptor role is filled by His-366. Residues Tyr-369 and Asn-380 each coordinate UDP-N-acetyl-alpha-D-glucosamine. Acetyl-CoA contacts are provided by residues Asn-389 to Tyr-390, Ser-408, Ala-426, and Arg-443.

This sequence in the N-terminal section; belongs to the N-acetylglucosamine-1-phosphate uridyltransferase family. The protein in the C-terminal section; belongs to the transferase hexapeptide repeat family. As to quaternary structure, homotrimer. Requires Mg(2+) as cofactor.

The protein resides in the cytoplasm. It catalyses the reaction alpha-D-glucosamine 1-phosphate + acetyl-CoA = N-acetyl-alpha-D-glucosamine 1-phosphate + CoA + H(+). The enzyme catalyses N-acetyl-alpha-D-glucosamine 1-phosphate + UTP + H(+) = UDP-N-acetyl-alpha-D-glucosamine + diphosphate. It participates in nucleotide-sugar biosynthesis; UDP-N-acetyl-alpha-D-glucosamine biosynthesis; N-acetyl-alpha-D-glucosamine 1-phosphate from alpha-D-glucosamine 6-phosphate (route II): step 2/2. Its pathway is nucleotide-sugar biosynthesis; UDP-N-acetyl-alpha-D-glucosamine biosynthesis; UDP-N-acetyl-alpha-D-glucosamine from N-acetyl-alpha-D-glucosamine 1-phosphate: step 1/1. It functions in the pathway bacterial outer membrane biogenesis; LPS lipid A biosynthesis. In terms of biological role, catalyzes the last two sequential reactions in the de novo biosynthetic pathway for UDP-N-acetylglucosamine (UDP-GlcNAc). The C-terminal domain catalyzes the transfer of acetyl group from acetyl coenzyme A to glucosamine-1-phosphate (GlcN-1-P) to produce N-acetylglucosamine-1-phosphate (GlcNAc-1-P), which is converted into UDP-GlcNAc by the transfer of uridine 5-monophosphate (from uridine 5-triphosphate), a reaction catalyzed by the N-terminal domain. The sequence is that of Bifunctional protein GlmU from Trichlorobacter lovleyi (strain ATCC BAA-1151 / DSM 17278 / SZ) (Geobacter lovleyi).